The following is a 358-amino-acid chain: B3 domain-containing transcription factor NGA3 (358 aa).

Residues methionine 1 to aspartate 14 are compositionally biased toward polar residues. The tract at residues methionine 1–methionine 45 is disordered. Over residues serine 25–methionine 45 the composition is skewed to low complexity. The TF-B3 DNA-binding region spans phenylalanine 56–proline 162. The tract at residues glutamate 310 to proline 358 is disordered. Over residues histidine 329 to aspartate 342 the composition is skewed to acidic residues.

It localises to the nucleus. Regulates lateral organ growth. Functionally redundant with NGA1, NGA2 and NGA4. The polypeptide is B3 domain-containing transcription factor NGA3 (NGA3) (Arabidopsis thaliana (Mouse-ear cress)).